The sequence spans 288 residues: Acetyl-coenzyme A carboxylase carboxyl transferase subunit beta (288 aa).

The region spanning 32–288 (LLLICPKCKK…ILMLHNVEAR (257 aa)) is the CoA carboxyltransferase N-terminal domain. Zn(2+) contacts are provided by Cys36, Cys39, Cys55, and Cys58. The C4-type zinc finger occupies 36–58 (CPKCKKTLLKSELADNLDVCREC).

Belongs to the AccD/PCCB family. Acetyl-CoA carboxylase is a heterohexamer composed of biotin carboxyl carrier protein (AccB), biotin carboxylase (AccC) and two subunits each of ACCase subunit alpha (AccA) and ACCase subunit beta (AccD). Zn(2+) serves as cofactor.

The protein localises to the cytoplasm. The catalysed reaction is N(6)-carboxybiotinyl-L-lysyl-[protein] + acetyl-CoA = N(6)-biotinyl-L-lysyl-[protein] + malonyl-CoA. It participates in lipid metabolism; malonyl-CoA biosynthesis; malonyl-CoA from acetyl-CoA: step 1/1. Its function is as follows. Component of the acetyl coenzyme A carboxylase (ACC) complex. Biotin carboxylase (BC) catalyzes the carboxylation of biotin on its carrier protein (BCCP) and then the CO(2) group is transferred by the transcarboxylase to acetyl-CoA to form malonyl-CoA. This chain is Acetyl-coenzyme A carboxylase carboxyl transferase subunit beta, found in Ruminiclostridium cellulolyticum (strain ATCC 35319 / DSM 5812 / JCM 6584 / H10) (Clostridium cellulolyticum).